The sequence spans 66 residues: U10-theraphotoxin-Cg1a 3 (66 aa).

Positions 1-21 (MKTSVLFVIFGLALLFCLSFA) are cleaved as a signal peptide. The propeptide occupies 22-29 (DELEDTGR). 3 cysteine pairs are disulfide-bonded: Cys31/Cys46, Cys38/Cys51, and Cys45/Cys58.

This sequence belongs to the neurotoxin 10 (Hwtx-1) family. 29 (Jztx-13) subfamily. As to expression, expressed by the venom gland.

It localises to the secreted. Its function is as follows. Probable ion channel inhibitor. This chain is U10-theraphotoxin-Cg1a 3, found in Chilobrachys guangxiensis (Chinese earth tiger tarantula).